The primary structure comprises 249 residues: MSSFSAECWDFSGRKPSFSQTCTRLSRYLKEKGSFGDLSLGMTCKPDVNGGSRQPTMMNLFPCEASGMDSSAGQEDIKPKTMFPRQSSFSSSSSSGTKEDVQMIKETTKSVKPESQSAPLTIFYGGRVMVFDDFSAEKAKEVIDLANKGSAKSFTCFTAEVNNNHSAYSQKEIASSPNPVCSPAKTAAQEPIQPNPASLACELPIARRASLHRFLEKRKDRITSKAPYQIDGSAEASSKPTNPAWLSSR.

The region spanning 113 to 148 is the Tify domain; that stretch reads PESQSAPLTIFYGGRVMVFDDFSAEKAKEVIDLANK. Residues 204–229 carry the Jas motif; that stretch reads PIARRASLHRFLEKRKDRITSKAPYQ. The Nuclear localization signal motif lies at 206–213; that stretch reads ARRASLHR. The segment at 225–249 is disordered; sequence KAPYQIDGSAEASSKPTNPAWLSSR. Over residues 235 to 249 the composition is skewed to polar residues; that stretch reads EASSKPTNPAWLSSR.

This sequence belongs to the TIFY/JAZ family. In terms of assembly, homo- and heterodimer. Interacts with COI1, MYC2, MYC3, MYC4, AFPH2/NINJA, TIFY10A/JAZ1, TIFY6B/JAZ3, TIFY11A/JAZ5, TIFY11B/JAZ6, TIFY5A/JAZ8, TIFY7/JAZ9, TIFY9/JAZ10, TIFY3A/JAZ11 and TIFY3B/JAZ12. Interacts with RHD6 and RSL1. As to quaternary structure, (Microbial infection) Interacts with the pathogenic Pseudomonas syringae HopZ1a protein. In terms of processing, (Microbial infection) Acetylated by Pseudomonas syringae HopZ1a. Ubiquitinated. Targeted for degradation by the SCF(COI1) E3 ubiquitin ligase-proteasome pathway during jasmonate signaling. In terms of tissue distribution, expressed in cotyledons, hypocotyls, roots, sepals, petal vascular tissue and stigmas of developing flowers. Expressed in stamen filaments after jasmonic acid treatment.

Its subcellular location is the nucleus. Functionally, repressor of jasmonate responses. Jasmonoyl-isoleucine (JA-Ile) specifically promotes COI1-TIFY10B/JAZ2 interaction. Activated by MYC2, MYC3 and MYC4 transcription factors. Interacts with and suppresses RHD6 and RSL1 transcription factor activities to negatively regulate jasmonate-stimulated root hair development. The protein is Protein TIFY 10B of Arabidopsis thaliana (Mouse-ear cress).